Reading from the N-terminus, the 247-residue chain is Granzyme B(G,H) (247 aa).

The N-terminal stretch at 1–18 (MKILLLLLTLSLASRTKA) is a signal peptide. The propeptide at 19-20 (GE) is activation peptide. In terms of domain architecture, Peptidase S1 spans 21 to 245 (IIGGHEVKPH…FLSWIKKTMK (225 aa)). An intrachain disulfide couples Cys49 to Cys65. His64 (charge relay system) is an active-site residue. Asn71 carries an N-linked (GlcNAc...) asparagine glycan. The active-site Charge relay system is Asp108. Cystine bridges form between Cys142–Cys209 and Cys173–Cys188. Asn182 carries N-linked (GlcNAc...) asparagine glycosylation. Residue Ser203 is the Charge relay system of the active site.

It belongs to the peptidase S1 family. Granzyme subfamily.

The protein resides in the secreted. It is found in the cytolytic granule. It carries out the reaction Preferential cleavage: -Asp-|-Xaa- &gt;&gt; -Asn-|-Xaa- &gt; -Met-|-Xaa-, -Ser-|-Xaa-.. Its activity is regulated as follows. Inactivated by the serine protease inhibitor diisopropylfluorophosphate. Its function is as follows. Abundant protease in the cytosolic granules of cytotoxic T-cells and NK-cells which activates caspase-independent pyroptosis when delivered into the target cell through the immunological synapse. It cleaves after Asp. Once delivered into the target cell, acts by catalyzing cleavage of gasdermin-E (GSDME), releasing the pore-forming moiety of GSDME, thereby triggering pyroptosis and target cell death. Seems to be linked to an activation cascade of caspases (aspartate-specific cysteine proteases) responsible for apoptosis execution. Cleaves caspase-3 and -9 (CASP3 and CASP9, respectively) to give rise to active enzymes mediating apoptosis. Cleaves and activates CASP7 in response to bacterial infection, promoting plasma membrane repair. This Mus musculus (Mouse) protein is Granzyme B(G,H) (Gzmb).